Here is a 261-residue protein sequence, read N- to C-terminus: 5'-nucleotidase SurE (261 aa).

Residues Asp-12, Asp-13, Ser-43, and Asn-100 each coordinate a divalent metal cation.

This sequence belongs to the SurE nucleotidase family. A divalent metal cation serves as cofactor.

It is found in the cytoplasm. The catalysed reaction is a ribonucleoside 5'-phosphate + H2O = a ribonucleoside + phosphate. Its function is as follows. Nucleotidase that shows phosphatase activity on nucleoside 5'-monophosphates. The polypeptide is 5'-nucleotidase SurE (Protochlamydia amoebophila (strain UWE25)).